The primary structure comprises 343 residues: Heat-inducible transcription repressor HrcA (343 aa).

This sequence belongs to the HrcA family.

In terms of biological role, negative regulator of class I heat shock genes (grpE-dnaK-dnaJ and groELS operons). Prevents heat-shock induction of these operons. The polypeptide is Heat-inducible transcription repressor HrcA (Mycolicibacterium smegmatis (strain ATCC 700084 / mc(2)155) (Mycobacterium smegmatis)).